Here is a 683-residue protein sequence, read N- to C-terminus: MTDALLPGSLNGKRLSEQNYFRKGKSIAQTGRSKLQNQRASLNQQILKAMRMRVGAENLLRATSNNKIREQVLLELSFVNSNLQRLKEELERLNISVEVYQHTEQDSNIPLIPLGLKETKDVDFTTAFKDFISEHYSEDASEYENELADLMDLRQACRTPSRDEAGVELLVSYFQQLGYLENRFFPPSRNLGILFTWYDSFTGVPVSQPNISLEKASILFNIAALYTQIGTRCNRQTKIGLEEAVTAFQKATGVLNYLKETFTHTPSYDMSPAMLGVLIKMLLAEAHECYFEKMILSGIQNEFCTLLKAAQEAAKVGEVHMQVYTLMNQAPIKENVPYSWSVMVQVKAEHYKALANYFVAIILIDYQLSLSDDEDKQEKAISQLYDSMPEGLTAQTILKDQQQRTLLGKAHLSKAIRSHEEAIRFSTLCSTLRQIDVLQKILSAFHQRSQLKFSQHQKPDDFLDLLSAPDIVSKTEYQAKTISPQLSKDKVTDIFQRLGPLSVFSVKQRWSAPRKICITKEDGDFGFVLRGDCPVQVISLDPLCPAATEGLKEGDYIVSVAGKDCKWCSTSQVMDMLQATGKQSIEIQVISIQDQTYSMPTKSATYYAGMQKTYSLVCLTMDNVKHTKTQKATKKLSFLSWGFRNRQKAASTLCLPSEVKGKPKTDNLFSFPDNSLCSESVLY.

An REM-1 domain is found at 25-99 (KSIAQTGRSK…LERLNISVEV (75 aa)). One can recognise a BRO1 domain in the interval 110–501 (PLIPLGLKET…TDIFQRLGPL (392 aa)). The PDZ domain occupies 515–592 (KICITKEDGD…QSIEIQVISI (78 aa)).

It belongs to the RHPN family. In terms of assembly, interacts with RhoA.

Its subcellular location is the cytoplasm. The protein localises to the perinuclear region. Its function is as follows. Binds specifically to GTP-Rho. This is Rhophilin-2-A (rhpn2-a) from Xenopus laevis (African clawed frog).